We begin with the raw amino-acid sequence, 313 residues long: MKIGIVGCGFVGATAAYAMVMRGVGRKLVMVDVNRARARAEAADISHAVPFAHALEVIAGEYEELEGASVVLVAAGVGQKPGETRLQLLERNAAIFKEVIPQVLRHAGDAVLLVASNPVDVLTHLAASIAGELGIPSSRVVGSGTTLDTARFRSLLSSSLGIDPRHVHAYVLGEHGDSEVLGWSTVTVGGMPLDAFAHRKGASFPPGLIASIDHQVRHAAYEIISGKQATYYGIGSALANIVEVMVYDRRSILTVCTPLPEVEGVENVTIALPHLVGGRGVLETFPPALDHMEREALRNSARIVRNAIESINV.

NAD(+)-binding positions include Val11, Asp32, Arg37, Tyr62, and 76–77; that span reads GV. Residues Gln79, Arg85, and 117–120 each bind substrate; that span reads NPVD. Residues 115 to 117 and Ser143 contribute to the NAD(+) site; that span reads ASN. Position 148 to 151 (148 to 151) interacts with substrate; the sequence is DTAR. Positions 153 and 168 each coordinate beta-D-fructose 1,6-bisphosphate. The active-site Proton acceptor is the His175. Position 221 is a phosphotyrosine (Tyr221). Thr230 is a binding site for substrate.

The protein belongs to the LDH/MDH superfamily. LDH family. In terms of assembly, homotetramer.

It localises to the cytoplasm. It carries out the reaction (S)-lactate + NAD(+) = pyruvate + NADH + H(+). It participates in fermentation; pyruvate fermentation to lactate; (S)-lactate from pyruvate: step 1/1. With respect to regulation, allosterically activated by fructose 1,6-bisphosphate (FBP). Its function is as follows. Catalyzes the conversion of lactate to pyruvate. In Geotalea daltonii (strain DSM 22248 / JCM 15807 / FRC-32) (Geobacter daltonii), this protein is L-lactate dehydrogenase.